Here is a 175-residue protein sequence, read N- to C-terminus: Nucleoside triphosphate/diphosphate phosphatase (175 aa).

Arginine 23 functions as the Proton donor in the catalytic mechanism. Residues asparagine 87, aspartate 103, aspartate 105, aspartate 107, aspartate 120, and glutamate 123 each contribute to the Mg(2+) site.

It belongs to the Ntdp family. It depends on Mg(2+) as a cofactor.

The enzyme catalyses a ribonucleoside 5'-triphosphate + H2O = a ribonucleoside 5'-diphosphate + phosphate + H(+). It carries out the reaction a ribonucleoside 5'-diphosphate + H2O = a ribonucleoside 5'-phosphate + phosphate + H(+). In terms of biological role, has nucleoside phosphatase activity towards nucleoside triphosphates and nucleoside diphosphates. The protein is Nucleoside triphosphate/diphosphate phosphatase of Listeria monocytogenes serotype 4b (strain CLIP80459).